A 61-amino-acid chain; its full sequence is UPF0337 protein LMOf2365_2190 (61 aa).

A disordered region spans residues 1 to 61 (MSEDKGMKDK…TGDAKKKLSE (61 aa)).

This sequence belongs to the UPF0337 (CsbD) family.

This chain is UPF0337 protein LMOf2365_2190, found in Listeria monocytogenes serotype 4b (strain F2365).